Reading from the N-terminus, the 392-residue chain is Odorant receptor 85f (392 aa).

The Cytoplasmic segment spans residues 1–36; the sequence is MEPVQYSYEDFARLPTTVFWIMGYDMLGVPKTRSRR. Residues 37 to 57 traverse the membrane as a helical segment; it reads ILYWIYRFLCLASHGVCVGVM. Topologically, residues 58–69 are extracellular; sequence VFRMVEAKTIDN. Residue Asn-69 is glycosylated (N-linked (GlcNAc...) asparagine). The helical transmembrane segment at 70–90 threads the bilayer; the sequence is VSLIMRYATLVTYIINSDTKF. Residues 91–130 are Cytoplasmic-facing; the sequence is ATVLQRSAIQSLNSKLAELYPKTTLDRIYHRVNDHYWTKS. Residues 131-151 form a helical membrane-spanning segment; sequence FVYLVIIYIGSSIMVVIGPII. Over 152–179 the chain is Extracellular; sequence TSIIAYFTHNVFTYMHCYPYFLYDPEKD. A helical transmembrane segment spans residues 180–200; that stretch reads PVWIYISIYALEWLHSTQMVI. Residues 201–268 lie on the Cytoplasmic side of the membrane; that stretch reads SNIGADIWLL…NDLNGIFGKS (68 aa). Residues 269 to 289 form a helical membrane-spanning segment; it reads LLLSLLTTAAVICTVAVYTLI. At 290 to 295 the chain is on the extracellular side; that stretch reads QGPTLE. A helical membrane pass occupies residues 296–316; it reads GFTYVIFIGTSVMQVYLVCYY. Residues 317–363 are Cytoplasmic-facing; it reads GQQVLDLSGEVAHAVYNHDFHDASIAYKRYLLIIIIRAQQPVELNAM. Residues 364-384 traverse the membrane as a helical segment; it reads GYLSISLDTFKQLMSVSYRVI. Topologically, residues 385 to 392 are extracellular; the sequence is TMLMQMIQ.

Belongs to the insect chemoreceptor superfamily. Heteromeric odorant receptor channel (TC 1.A.69) family. Or49a subfamily. As to quaternary structure, interacts with Orco. Complexes exist early in the endomembrane system in olfactory sensory neurons (OSNs), coupling these complexes to the conserved ciliary trafficking pathway. As to expression, expressed in olfactory sensory neurons in the antenna.

The protein localises to the cell membrane. Functionally, odorant receptor which mediates acceptance or avoidance behavior, depending on its substrates. The odorant receptor repertoire encodes a large collection of odor stimuli that vary widely in identity, intensity, and duration. May form a complex with Orco to form odorant-sensing units, providing sensitive and prolonged odorant signaling and calcium permeability. This is Odorant receptor 85f (Or85f) from Drosophila melanogaster (Fruit fly).